We begin with the raw amino-acid sequence, 688 residues long: DNA topoisomerase 1 (688 aa).

Residues glutamate 3–isoleucine 113 enclose the Toprim domain. The Mg(2+) site is built by glutamate 9 and aspartate 82. The 428-residue stretch at glutamate 129–glutamate 556 folds into the Topo IA-type catalytic domain. Residues serine 163–glutamine 168 are interaction with DNA. Tyrosine 298 serves as the catalytic O-(5'-phospho-DNA)-tyrosine intermediate. Residues tyrosine 322–threonine 349 form a disordered region. Basic and acidic residues predominate over residues glycine 334 to isoleucine 344. C4-type zinc fingers lie at residues cysteine 576–cysteine 602, cysteine 616–cysteine 644, and cysteine 657–cysteine 680.

Belongs to the type IA topoisomerase family. Monomer. Mg(2+) serves as cofactor.

The enzyme catalyses ATP-independent breakage of single-stranded DNA, followed by passage and rejoining.. Functionally, releases the supercoiling and torsional tension of DNA, which is introduced during the DNA replication and transcription, by transiently cleaving and rejoining one strand of the DNA duplex. Introduces a single-strand break via transesterification at a target site in duplex DNA. The scissile phosphodiester is attacked by the catalytic tyrosine of the enzyme, resulting in the formation of a DNA-(5'-phosphotyrosyl)-enzyme intermediate and the expulsion of a 3'-OH DNA strand. The free DNA strand then undergoes passage around the unbroken strand, thus removing DNA supercoils. Finally, in the religation step, the DNA 3'-OH attacks the covalent intermediate to expel the active-site tyrosine and restore the DNA phosphodiester backbone. The sequence is that of DNA topoisomerase 1 from Staphylococcus saprophyticus subsp. saprophyticus (strain ATCC 15305 / DSM 20229 / NCIMB 8711 / NCTC 7292 / S-41).